The primary structure comprises 521 residues: Caspase-10 (521 aa).

Residues 1–219 constitute a propeptide that is removed on maturation; it reads MKSQGQHWYS…GEEELVSQTD (219 aa). DED domains lie at 19–97 and 114–187; these read SFRE…HLNC and LFRN…NIEK. Polar residues-rich tracts occupy residues 231–248 and 259–268; these read SWQN…TNGA and ASANTLNSET. A disordered region spans residues 231-269; the sequence is SWQNKHAGSNGNRATNGAPSLVSRGMQGASANTLNSETS. Residues His-358 and Cys-401 contribute to the active site.

Belongs to the peptidase C14A family. Heterotetramer that consists of two anti-parallel arranged heterodimers, each one formed by a 23/17 kDa (p23/17) (depending on the splicing events) and a 12 kDa (p12) subunit. Self-associates. Interacts with FADD and CASP8. Found in a Fas signaling complex consisting of FAS, FADD, CASP8 and CASP10. Interacts with RFFL and RNF34; negatively regulate CASP10 through proteasomal degradation. Interacts with RIOK3. In terms of processing, cleavage by granzyme B and autocatalytic activity generate the two active subunits. Detectable in most tissues. Lowest expression is seen in brain, kidney, prostate, testis and colon.

The catalysed reaction is Strict requirement for Asp at position P1 and has a preferred cleavage sequence of Leu-Gln-Thr-Asp-|-Gly.. In terms of biological role, involved in the activation cascade of caspases responsible for apoptosis execution. Recruited to both Fas- and TNFR-1 receptors in a FADD dependent manner. May participate in the granzyme B apoptotic pathways. Cleaves and activates effector caspases CASP3, CASP4, CASP6, CASP7, CASP8 and CASP9. Hydrolyzes the small- molecule substrates, Tyr-Val-Ala-Asp-|-AMC and Asp-Glu-Val-Asp-|-AMC. Functionally, isoform 7 can enhance NF-kappaB activity but promotes only slight apoptosis. Isoform C is proteolytically inactive. In Homo sapiens (Human), this protein is Caspase-10 (CASP10).